The primary structure comprises 782 residues: Zinc finger protein 786 (782 aa).

In terms of domain architecture, KRAB spans 9 to 80 (LTFEDVAIYF…WRESQKSGNI (72 aa)). Residues 141-164 (PQRHDARAPPPLACGPSESTLKEG) form a disordered region. The C2H2-type 1; degenerate zinc finger occupies 192 to 209 (CGESCWENNHLVMHQRGH). The segment at 240–262 (FRCGVCGKSFRRKLCLLRHLAAH) adopts a C2H2-type 2 zinc-finger fold. Positions 285–364 (SHRLPQQGEK…EGDTEALQHG (80 aa)) are disordered. A C2H2-type 3; degenerate zinc finger spans residues 369 to 391 (CSCSECGERSPMSARLASPCRAH). C2H2-type zinc fingers lie at residues 397-419 (FQCA…QHAH), 425-447 (FSCR…IRVH), and 453-475 (FRCA…QRLH). A C2H2-type 7; degenerate zinc finger spans residues 481 to 503 (FQCPECGLSFRLESMLRAHRLRH). 9 consecutive C2H2-type zinc fingers follow at residues 509 to 531 (FSCS…LRVH), 537 to 559 (FQCL…QHTH), 565 to 587 (FSCG…LRVH), 593 to 615 (FQCP…QRLH), 621 to 643 (FQCP…QLLH), 649 to 670 (FSCE…IRTH), 676 to 698 (FQCP…QGLH), 704 to 726 (FHCP…QRIH), and 732 to 754 (FACG…IRVH).

It belongs to the krueppel C2H2-type zinc-finger protein family.

It is found in the nucleus. Its function is as follows. May be involved in transcriptional regulation. This Homo sapiens (Human) protein is Zinc finger protein 786 (ZNF786).